The primary structure comprises 514 residues: NAD(P)H-quinone oxidoreductase subunit 2 (514 aa).

The next 14 helical transmembrane spans lie at 16 to 36, 43 to 63, 80 to 100, 110 to 130, 133 to 153, 168 to 188, 211 to 231, 245 to 265, 279 to 299, 307 to 327, 335 to 355, 379 to 399, 411 to 431, and 467 to 487; these read IWPEGIIIITLMVILIGDLIV, WLPYVAIAGLLAAVVALYFEW, LSIVFRAIVALSTTVTILMSV, LAEFIAIMLTATLGGMFLSGA, LVMIFISLEMLSISSYLMTGY, LLIGASSSAIFLYGVSLLYGL, LGLAIALVFVIAGIAFKISAV, PTPVVAFLSVGSKAAGFALAI, WHFIFTALAILSMVLGNVVAL, MLAYSSIGQAGFVMIGLTANS, IFYLLIYLFMNLGAFICIILF, LGLSICLLSLGGIPPLAGFFG, GLYGLVLLGLVTSVISIYYYI, and VGLVLSVIATSLAGILSNPLF.

Belongs to the complex I subunit 2 family. NDH-1 can be composed of about 15 different subunits; different subcomplexes with different compositions have been identified which probably have different functions.

The protein resides in the cellular thylakoid membrane. It catalyses the reaction a plastoquinone + NADH + (n+1) H(+)(in) = a plastoquinol + NAD(+) + n H(+)(out). The catalysed reaction is a plastoquinone + NADPH + (n+1) H(+)(in) = a plastoquinol + NADP(+) + n H(+)(out). In terms of biological role, NDH-1 shuttles electrons from an unknown electron donor, via FMN and iron-sulfur (Fe-S) centers, to quinones in the respiratory and/or the photosynthetic chain. The immediate electron acceptor for the enzyme in this species is believed to be plastoquinone. Couples the redox reaction to proton translocation, and thus conserves the redox energy in a proton gradient. Cyanobacterial NDH-1 also plays a role in inorganic carbon-concentration. In Gloeothece citriformis (strain PCC 7424) (Cyanothece sp. (strain PCC 7424)), this protein is NAD(P)H-quinone oxidoreductase subunit 2.